The chain runs to 246 residues: mRNA-decapping protein g5R (246 aa).

One can recognise a Nudix hydrolase domain in the interval 93 to 239 (QKFRKNWLLP…IIGPAFNFIK (147 aa)). Residues 128–149 (GKPKEDESDLTCAIREFEEETG) carry the Nudix box motif. Mg(2+) is bound at residue Glu134. The active-site Nucleophile is Glu143. Residues Glu147 and Asp169 each contribute to the Mg(2+) site.

This sequence belongs to the Nudix hydrolase family. DIPP subfamily. As to quaternary structure, interacts with host RPL23A. The cofactor is Mg(2+). Requires Mn(2+) as cofactor.

The protein localises to the host rough endoplasmic reticulum. It catalyses the reaction diphospho-myo-inositol polyphosphate + H2O = myo-inositol polyphosphate + phosphate.. Decapping enzyme required for the removal of the 5'-end m7GpppN cap tethered to viral and host mRNAs to allow their decay in cells. May therefore accelerate viral and cellular mRNA turnover to eliminate competing host mRNAs and allow stage-specific synthesis of viral proteins. Acceleration of the turnover of cellular transcripts may even promote the shutoff of host protein synthesis. In addition to the mRNA cap, g5R also efficiently hydrolyzes diphosphoinositol polyphosphates. Down-regulation of the level of PP-InsP5 (diphosphoinositol pentakisphosphate) may play a role in viral manipulation of the cellular secretory pathway, a step necessary for the formation of virions. Binds viral and cellular poly(A) mRNAs, thereby decreasing both types of mRNAs. This is mRNA-decapping protein g5R from African swine fever virus (isolate Warthog/Namibia/Wart80/1980) (ASFV).